A 257-amino-acid polypeptide reads, in one-letter code: Pimeloyl-[acyl-carrier protein] methyl ester esterase (257 aa).

The AB hydrolase-1 domain occupies 15–241; the sequence is HLVLLHGWGL…KAAHAPFVSH (227 aa). Residues Trp22, 82–83, and 143–147 contribute to the substrate site; these read SL and FLALQ. Ser82 (nucleophile) is an active-site residue. Residues Asp207 and His235 contribute to the active site. His235 is a substrate binding site.

Belongs to the AB hydrolase superfamily. Carboxylesterase BioH family. As to quaternary structure, monomer.

It is found in the cytoplasm. It carries out the reaction 6-carboxyhexanoyl-[ACP] methyl ester + H2O = 6-carboxyhexanoyl-[ACP] + methanol + H(+). It functions in the pathway cofactor biosynthesis; biotin biosynthesis. The physiological role of BioH is to remove the methyl group introduced by BioC when the pimeloyl moiety is complete. It allows to synthesize pimeloyl-ACP via the fatty acid synthetic pathway through the hydrolysis of the ester bonds of pimeloyl-ACP esters. In Klebsiella pneumoniae subsp. pneumoniae (strain ATCC 700721 / MGH 78578), this protein is Pimeloyl-[acyl-carrier protein] methyl ester esterase.